We begin with the raw amino-acid sequence, 356 residues long: Probable G-protein coupled receptor 32 (356 aa).

At 1–44 the chain is on the extracellular side; it reads MNGVSEGTRGCSDRQPGVLTRDRSCSRKMNSSGCLSEEVGSLRP. An N-linked (GlcNAc...) asparagine glycan is attached at Asn30. The chain crosses the membrane as a helical span at residues 45–67; sequence LTVVILSASIVVGVLGNGLVLWM. The Cytoplasmic segment spans residues 68 to 78; it reads TVFRMARTVST. Residues 79 to 100 traverse the membrane as a helical segment; that stretch reads VCFFHLALADFMLSLSLPIAMY. Residues 101–116 lie on the Extracellular side of the membrane; sequence YIVSRQWLLGEWACKL. Cys114 and Cys191 are oxidised to a cystine. The helical transmembrane segment at 117–137 threads the bilayer; sequence YITFVFLSYFASNCLLVFISV. Residues 138–156 lie on the Cytoplasmic side of the membrane; it reads DRCISVLYPVWALNHRTVQ. A helical membrane pass occupies residues 157–178; sequence RASWLAFGVWLLAAALCSAHLK. At 179-220 the chain is on the extracellular side; sequence FRTTRKWNGCTHCYLAFNSDNETAQIWIEGVVEGHIIGTIGH. N-linked (GlcNAc...) asparagine glycosylation occurs at Asn199. The chain crosses the membrane as a helical span at residues 221-241; that stretch reads FLLGFLGPLAIIGTCAHLIRA. Residues 242–257 lie on the Cytoplasmic side of the membrane; that stretch reads KLLREGWVHANRPKRL. Residues 258-280 form a helical membrane-spanning segment; that stretch reads LLVLVSAFFIFWSPFNVVLLVHL. Over 281–300 the chain is Extracellular; sequence WRRVMLKEIYHPRMLLILQA. A helical transmembrane segment spans residues 301–320; that stretch reads SFALGCVNSSLNPFLYVFVG. Residues 321-356 lie on the Cytoplasmic side of the membrane; that stretch reads RDFQEKFFQSLTSALARAFGEEEFLSSCPRGNAPRE.

This sequence belongs to the G-protein coupled receptor 1 family. In terms of tissue distribution, expressed in resting primary human macrophages.

Its subcellular location is the cell membrane. In terms of biological role, G-protein coupled receptor that binds to several ligands including resolvin D1 (RvD1) with high affinity, leading to rapid and transient activation of numerous intracellular signaling pathways. In macrophages, enhances the RvD1-stimulated phagocytic and clearance functions. Macrophages migrate less toward different chemoattractant stimuli but phagocytose more microbial particles. Prevents the increase in Ca(2+) and activation of ERK1/2 used by histamine and its H1 receptor subtype to induce goblet cell secretion by activating PKC and GRK2 to counter-regulate the histamine receptor. The sequence is that of Probable G-protein coupled receptor 32 (GPR32) from Homo sapiens (Human).